A 350-amino-acid chain; its full sequence is Methylthioribose-1-phosphate isomerase (350 aa).

Substrate-binding positions include 48–50, Arg93, and Gln198; that span reads RGA. Residue Asp239 is the Proton donor of the active site. 249–250 is a binding site for substrate; that stretch reads NK.

Belongs to the eIF-2B alpha/beta/delta subunits family. MtnA subfamily.

It carries out the reaction 5-(methylsulfanyl)-alpha-D-ribose 1-phosphate = 5-(methylsulfanyl)-D-ribulose 1-phosphate. The protein operates within amino-acid biosynthesis; L-methionine biosynthesis via salvage pathway; L-methionine from S-methyl-5-thio-alpha-D-ribose 1-phosphate: step 1/6. Functionally, catalyzes the interconversion of methylthioribose-1-phosphate (MTR-1-P) into methylthioribulose-1-phosphate (MTRu-1-P). The protein is Methylthioribose-1-phosphate isomerase of Fervidobacterium nodosum (strain ATCC 35602 / DSM 5306 / Rt17-B1).